Here is a 90-residue protein sequence, read N- to C-terminus: Probable Fe(2+)-trafficking protein (90 aa).

The protein belongs to the Fe(2+)-trafficking protein family.

Its function is as follows. Could be a mediator in iron transactions between iron acquisition and iron-requiring processes, such as synthesis and/or repair of Fe-S clusters in biosynthetic enzymes. The sequence is that of Probable Fe(2+)-trafficking protein from Nitrosomonas eutropha (strain DSM 101675 / C91 / Nm57).